A 1240-amino-acid polypeptide reads, in one-letter code: Pectate lyase L (1240 aa).

The first 26 residues, 1–26 (MRNCKGLSILLCFLLVFFAMPFPAVA), serve as a signal peptide directing secretion. Has catalytic activity stretches follow at residues 27 to 551 (EEAE…VTVR) and 545 to 1240 (TLKV…KSIK). Residues D325, E349, D350, D1049, D1073, D1074, and D1077 each contribute to the Ca(2+) site. K1117 (proton acceptor) is an active-site residue.

The protein belongs to the polysaccharide lyase 9 family. The cofactor is Ca(2+).

The protein resides in the secreted. The catalysed reaction is Eliminative cleavage of (1-&gt;4)-alpha-D-galacturonan to give oligosaccharides with 4-deoxy-alpha-D-galact-4-enuronosyl groups at their non-reducing ends.. Inhibited by the metal chelator ethylenediaminetetraacetic acid (EDTA). Cleaves polygalacturonate or partially methylated pectin. When assayed on polygalacturonate or on pectin, it releases monogalacturonate as the principal product. This Thermoclostridium stercorarium (Clostridium stercorarium) protein is Pectate lyase L.